Reading from the N-terminus, the 422-residue chain is L-cysteine:1D-myo-inositol 2-amino-2-deoxy-alpha-D-glucopyranoside ligase (422 aa).

Cysteine 43 is a binding site for Zn(2+). Residues 43 to 46 (CGIT), threonine 58, and 81 to 83 (NVT) contribute to the L-cysteinyl-5'-AMP site. The short motif at 45–55 (ITPYDATHLGH) is the 'HIGH' region element. The span at 185-200 (AERGGDPDRPGKRNRL) shows a compositional bias: basic and acidic residues. A disordered region spans residues 185 to 221 (AERGGDPDRPGKRNRLDPMLWRGRRPGEPSWPGPRGV). The short motif at 186–191 (ERGGDP) is the 'ERGGDP' region element. Residue tryptophan 227 coordinates L-cysteinyl-5'-AMP. Residue cysteine 231 coordinates Zn(2+). L-cysteinyl-5'-AMP is bound at residue 249–251 (GSD). Histidine 256 lines the Zn(2+) pocket. Isoleucine 288 is an L-cysteinyl-5'-AMP binding site. The 'KMSKS' region motif lies at 294 to 298 (KMSKS).

Belongs to the class-I aminoacyl-tRNA synthetase family. MshC subfamily. Monomer. Zn(2+) serves as cofactor.

The catalysed reaction is 1D-myo-inositol 2-amino-2-deoxy-alpha-D-glucopyranoside + L-cysteine + ATP = 1D-myo-inositol 2-(L-cysteinylamino)-2-deoxy-alpha-D-glucopyranoside + AMP + diphosphate + H(+). Catalyzes the ATP-dependent condensation of GlcN-Ins and L-cysteine to form L-Cys-GlcN-Ins. This is L-cysteine:1D-myo-inositol 2-amino-2-deoxy-alpha-D-glucopyranoside ligase from Geodermatophilus obscurus (strain ATCC 25078 / DSM 43160 / JCM 3152 / CCUG 61914 / KCC A-0152 / KCTC 9177 / NBRC 13315 / NRRL B-3577 / G-20).